Consider the following 74-residue polypeptide: Brevinin-2Ta (74 aa).

An N-terminal signal peptide occupies residues 1-22 (MFTMKKSLLLFFFLGTISLSLC). Positions 23 to 41 (QEERNADEDDGEMTEEEKR) are excised as a propeptide. A disulfide bridge connects residues C68 and C74.

The protein belongs to the frog skin active peptide (FSAP) family. Brevinin subfamily. As to expression, expressed by the skin glands.

It is found in the secreted. Its function is as follows. Antimicrobial peptide. In Rana temporaria (European common frog), this protein is Brevinin-2Ta.